We begin with the raw amino-acid sequence, 690 residues long: Heterogeneous nuclear ribonucleoprotein M (690 aa).

Low complexity predominate over residues 1–13 (MAAGVEAAAEVAA). A disordered region spans residues 1–63 (MAAGVEAAAE…KRGGNRFEPY (63 aa)). At Ala2 the chain carries N-acetylalanine. Residue Lys17 forms a Glycyl lysine isopeptide (Lys-Gly) (interchain with G-Cter in SUMO2) linkage. A Phosphoserine modification is found at Ser29. Glycyl lysine isopeptide (Lys-Gly) (interchain with G-Cter in SUMO2) cross-links involve residues Lys37, Lys68, and Lys82. Over residues 37–49 (KGEERPTQNEKRK) the composition is skewed to basic and acidic residues. RRM domains lie at 70–148 (YRAF…EDPD) and 164–241 (STVF…MDER). Ser85 is subject to Phosphoserine. Glycyl lysine isopeptide (Lys-Gly) (interchain with G-Cter in SUMO2) cross-links involve residues Lys87 and Lys126. N6-acetyllysine; alternate is present on Lys133. Residue Lys133 forms a Glycyl lysine isopeptide (Lys-Gly) (interchain with G-Cter in SUMO2); alternate linkage. Residues Lys142 and Lys144 each participate in a glycyl lysine isopeptide (Lys-Gly) (interchain with G-Cter in SUMO2) cross-link. Position 164 is a phosphoserine (Ser164). Lys181 participates in a covalent cross-link: Glycyl lysine isopeptide (Lys-Gly) (interchain with G-Cter in SUMO2). Lys237 carries the N6-acetyllysine; alternate modification. Lys237 is covalently cross-linked (Glycyl lysine isopeptide (Lys-Gly) (interchain with G-Cter in SUMO2); alternate). Glycyl lysine isopeptide (Lys-Gly) (interchain with G-Cter in SUMO2) cross-links involve residues Lys245 and Lys305. Phosphoserine is present on residues Ser325 and Ser337. Residues Lys341 and Lys348 each participate in a glycyl lysine isopeptide (Lys-Gly) (interchain with G-Cter in SUMO2) cross-link. Position 357 is a phosphoserine (Ser357). 4 repeat units span residues 360–365 (GIERMG), 367–372 (GIDRIS), 375–380 (GMERMG), and 386–391 (GMDRVG). The 27 X 6 AA repeats of [GEVSTPAN]-[ILMV]-[DE]-[RH]-[MLVI]-[GAV] stretch occupies residues 360 to 568 (GIERMGPGID…ALGAGIERMG (209 aa)). Residue Ser392 is modified to Phosphoserine. Tandem repeats lie at residues 393–398 (EIERMG), 400–405 (VMDRMG), and 406–411 (SVERMG). Ser412 carries the post-translational modification Phosphoserine. A run of 4 repeats spans residues 413-418 (GIERMG), 421-426 (GLDHMA), 428-433 (SIERMG), and 435-440 (TMERIG). Ser428 bears the Phosphoserine mark. Ser441 carries the phosphoserine modification. 16 tandem repeats follow at residues 442 to 447 (GVERMG), 453 to 458 (GLERMA), 460 to 465 (PIDRVG), 467 to 472 (TIERMG), 474 to 479 (GVERMG), 481 to 486 (AIERMG), 488 to 493 (SMDRMV), 500 to 505 (GLERMG), 507 to 512 (VMDRMA), 514 to 519 (GLERMG), 522 to 527 (NLERMG), 528 to 532 (LERMG), 535 to 540 (SLERMG), 541 to 545 (LERMG), 548 to 553 (SLERMG), and 563 to 568 (GIERMG). Arg456 carries the post-translational modification Omega-N-methylarginine. Position 488 is a phosphoserine (Ser488). At Ser535 the chain carries Phosphoserine. At Ser548 the chain carries Phosphoserine. 3 positions are modified to phosphoserine: Ser578, Ser593, and Ser597. A Glycyl lysine isopeptide (Lys-Gly) (interchain with G-Cter in SUMO2) cross-link involves residue Lys611. An RRM 3 domain is found at 613–689 (CQIFVRNLPF…REIDVRIDRN (77 aa)). Position 625 is a phosphothreonine (Thr625). Lys627 is covalently cross-linked (Glycyl lysine isopeptide (Lys-Gly) (interchain with G-Cter in SUMO2)). The residue at position 632 (Lys632) is an N6-acetyllysine. Glycyl lysine isopeptide (Lys-Gly) (interchain with G-Cter in SUMO2) cross-links involve residues Lys645 and Lys652. Lys658 is subject to N6-acetyllysine; alternate. Residue Lys658 forms a Glycyl lysine isopeptide (Lys-Gly) (interchain with G-Cter in SUMO2); alternate linkage. Residue Lys658 forms a Glycyl lysine isopeptide (Lys-Gly) (interchain with G-Cter in SUMO1); alternate linkage. Ser661 is subject to Phosphoserine. Residue Lys676 forms a Glycyl lysine isopeptide (Lys-Gly) (interchain with G-Cter in SUMO2) linkage.

As to quaternary structure, identified in the spliceosome C complex. Interacts with PPIA/CYPA. In terms of processing, sumoylated. In terms of tissue distribution, expressed in all tissues tested, including liver, heart, lung, skeletal muscle, kidney, stomach, large intestine, small intestine, pancreas, spleen, peritoneal macrophage and thyroid.

Its subcellular location is the nucleus matrix. Its function is as follows. Pre-mRNA binding protein, binds avidly to poly(G) and poly(U) RNA homopolymers. Involved in splicing. Acts as a receptor for carcinoembryonic antigen in Kupffer cells, may initiate a series of signaling events leading to tyrosine phosphorylation of proteins and induction of IL-1 alpha, IL-6, IL-10 and tumor necrosis factor alpha cytokines. This Rattus norvegicus (Rat) protein is Heterogeneous nuclear ribonucleoprotein M (Hnrnpm).